The primary structure comprises 235 residues: Fms-related tyrosine kinase 3 ligand (235 aa).

A signal peptide spans 1–26 (MTVLAPAWSPTTYLLLLLLLSSGLSG). Residues 27 to 184 (TQDCSFQHSP…EATAPTAPQP (158 aa)) are Extracellular-facing. Intrachain disulfides connect cysteine 30–cysteine 111, cysteine 70–cysteine 153, and cysteine 119–cysteine 158. 2 N-linked (GlcNAc...) asparagine glycosylation sites follow: asparagine 126 and asparagine 149. Residues 185 to 205 (PLLLLLLLPVGLLLLAAAWCL) traverse the membrane as a helical segment. Topologically, residues 206–235 (HWQRTRRRTPRPGEQVPPVPSPQDLLLVEH) are cytoplasmic. Residues 213 to 235 (RTPRPGEQVPPVPSPQDLLLVEH) are disordered.

In terms of assembly, homodimer (isoform 2).

It is found in the cell membrane. The protein localises to the secreted. In terms of biological role, stimulates the proliferation of early hematopoietic cells by activating FLT3. Synergizes well with a number of other colony stimulating factors and interleukins. Required for the development of B cells, and dendritic cells (DCs). This is Fms-related tyrosine kinase 3 ligand (FLT3LG) from Homo sapiens (Human).